A 134-amino-acid chain; its full sequence is UPF0357 protein AAL017W (134 aa).

Positions 1–23 (MFGLISLWHLFWLAVMAGILVVA) are cleaved as a signal peptide.

Belongs to the UPF0357 family.

The polypeptide is UPF0357 protein AAL017W (Eremothecium gossypii (strain ATCC 10895 / CBS 109.51 / FGSC 9923 / NRRL Y-1056) (Yeast)).